The chain runs to 221 residues: GTP cyclohydrolase III (221 aa).

It belongs to the archaeal-type GTP cyclohydrolase family.

It catalyses the reaction GTP + 3 H2O = 2-amino-5-formylamino-6-(5-phospho-D-ribosylamino)pyrimidin-4(3H)-one + 2 phosphate + 2 H(+). Functionally, catalyzes the formation of 2-amino-5-formylamino-6-ribofuranosylamino-4(3H)-pyrimidinone ribonucleotide monophosphate and inorganic phosphate from GTP. Also has an independent pyrophosphate phosphohydrolase activity. This chain is GTP cyclohydrolase III, found in Pyrobaculum neutrophilum (strain DSM 2338 / JCM 9278 / NBRC 100436 / V24Sta) (Thermoproteus neutrophilus).